We begin with the raw amino-acid sequence, 201 residues long: Recombination protein RecR (201 aa).

The segment at Cys57–Cys72 adopts a C4-type zinc-finger fold. The 96-residue stretch at Gly81–Pro176 folds into the Toprim domain.

Belongs to the RecR family.

Its function is as follows. May play a role in DNA repair. It seems to be involved in an RecBC-independent recombinational process of DNA repair. It may act with RecF and RecO. This chain is Recombination protein RecR, found in Cronobacter sakazakii (strain ATCC BAA-894) (Enterobacter sakazakii).